Reading from the N-terminus, the 487-residue chain is Fatty acid desaturase 2-like protein FADS2B (487 aa).

A compositionally biased stretch (basic and acidic residues) spans M1–E11. The tract at residues M1–C20 is disordered. Topologically, residues M1–R175 are cytoplasmic. The 78-residue stretch at L62–S139 folds into the Cytochrome b5 heme-binding domain. Heme contacts are provided by H97 and H120. The chain crosses the membrane as a helical span at residues F176–H196. The Lumenal segment spans residues H197 to S201. Residues W202–L222 traverse the membrane as a helical segment. The Cytoplasmic segment spans residues Q223–H307. The short motif at H224–H228 is the Histidine box-1 element. Positions H261–H265 match the Histidine box-2 motif. Residues L308 to M328 form a helical membrane-spanning segment. At Q329–R349 the chain is on the lumenal side. A helical membrane pass occupies residues Y350–V370. Topologically, residues K371–E487 are cytoplasmic. Positions Q426–H430 match the Histidine box-3 motif.

The protein belongs to the fatty acid desaturase type 1 family.

The protein localises to the endoplasmic reticulum membrane. Its pathway is lipid metabolism; polyunsaturated fatty acid biosynthesis. This chain is Fatty acid desaturase 2-like protein FADS2B, found in Mus musculus (Mouse).